We begin with the raw amino-acid sequence, 199 residues long: Recombination protein RecR (199 aa).

The C4-type zinc finger occupies 57–72 (CQQCRTFTEQNLCAIC). Residues 81-176 (GMICVVEMPV…KVSRIAHGVP (96 aa)) form the Toprim domain.

It belongs to the RecR family.

In terms of biological role, may play a role in DNA repair. It seems to be involved in an RecBC-independent recombinational process of DNA repair. It may act with RecF and RecO. This is Recombination protein RecR from Psychromonas ingrahamii (strain DSM 17664 / CCUG 51855 / 37).